Consider the following 283-residue polypeptide: Polyamine aminopropyltransferase (283 aa).

The 236-residue stretch at 5 to 240 (NTWFTEIHQD…GWWTATMACK (236 aa)) folds into the PABS domain. Gln-33 contributes to the S-methyl-5'-thioadenosine binding site. Spermidine contacts are provided by His-64 and Asp-88. S-methyl-5'-thioadenosine is bound by residues Asp-108 and 139 to 140 (DG). Asp-158 (proton acceptor) is an active-site residue. 158–161 (DSTD) is a binding site for spermidine. Pro-165 is an S-methyl-5'-thioadenosine binding site.

Belongs to the spermidine/spermine synthase family. Homodimer or homotetramer.

The protein localises to the cytoplasm. The catalysed reaction is S-adenosyl 3-(methylsulfanyl)propylamine + putrescine = S-methyl-5'-thioadenosine + spermidine + H(+). The protein operates within amine and polyamine biosynthesis; spermidine biosynthesis; spermidine from putrescine: step 1/1. Its function is as follows. Catalyzes the irreversible transfer of a propylamine group from the amino donor S-adenosylmethioninamine (decarboxy-AdoMet) to putrescine (1,4-diaminobutane) to yield spermidine. The polypeptide is Polyamine aminopropyltransferase (Thioalkalivibrio sulfidiphilus (strain HL-EbGR7)).